A 155-amino-acid polypeptide reads, in one-letter code: Small ribosomal subunit protein uS7 (155 aa).

The protein belongs to the universal ribosomal protein uS7 family. As to quaternary structure, part of the 30S ribosomal subunit. Contacts proteins S9 and S11.

Its function is as follows. One of the primary rRNA binding proteins, it binds directly to 16S rRNA where it nucleates assembly of the head domain of the 30S subunit. Is located at the subunit interface close to the decoding center, probably blocks exit of the E-site tRNA. The protein is Small ribosomal subunit protein uS7 of Sulfurimonas denitrificans (strain ATCC 33889 / DSM 1251) (Thiomicrospira denitrificans (strain ATCC 33889 / DSM 1251)).